Reading from the N-terminus, the 51-residue chain is Sperm protamine P1 (51 aa).

Disulfide bonds link Cys-7–Cys-15 and Cys-40–Cys-48.

Belongs to the protamine P1 family. In terms of assembly, cross-linked by interchain disulfide bonds around the DNA-helix. In terms of processing, phosphorylated by SRPK1. Testis.

The protein localises to the nucleus. Its subcellular location is the chromosome. Its function is as follows. Protamines substitute for histones in the chromatin of sperm during the haploid phase of spermatogenesis. They compact sperm DNA into a highly condensed, stable and inactive complex. The chain is Sperm protamine P1 (PRM1) from Bos taurus (Bovine).